The sequence spans 84 residues: Sulfur carrier protein TusA (84 aa).

Cysteine 19 serves as the catalytic Cysteine persulfide intermediate.

Belongs to the sulfur carrier protein TusA family. As to quaternary structure, interacts with IscS.

It localises to the cytoplasm. It functions in the pathway tRNA modification. Its function is as follows. Sulfur carrier protein involved in sulfur trafficking in the cell. Part of a sulfur-relay system required for 2-thiolation during synthesis of 2-thiouridine of the modified wobble base 5-methylaminomethyl-2-thiouridine (mnm(5)s(2)U) in tRNA. Interacts with IscS and stimulates its cysteine desulfurase activity. Accepts an activated sulfur from IscS, which is then transferred to TusD, and thus determines the direction of sulfur flow from IscS to 2-thiouridine formation. Also appears to be involved in sulfur transfer for the biosynthesis of molybdopterin. The chain is Sulfur carrier protein TusA from Photorhabdus laumondii subsp. laumondii (strain DSM 15139 / CIP 105565 / TT01) (Photorhabdus luminescens subsp. laumondii).